The sequence spans 465 residues: Glutamate--tRNA ligase (465 aa).

Positions 5–15 (PSPTGMFHVGG) match the 'HIGH' region motif. Zn(2+)-binding residues include Cys-96, Cys-98, Cys-118, and Asp-120. A 'KMSKS' region motif is present at residues 228 to 232 (KLSKR). Position 231 (Lys-231) interacts with ATP.

This sequence belongs to the class-I aminoacyl-tRNA synthetase family. Glutamate--tRNA ligase type 1 subfamily. As to quaternary structure, monomer. Zn(2+) serves as cofactor.

It is found in the cytoplasm. The enzyme catalyses tRNA(Glu) + L-glutamate + ATP = L-glutamyl-tRNA(Glu) + AMP + diphosphate. Functionally, catalyzes the attachment of glutamate to tRNA(Glu) in a two-step reaction: glutamate is first activated by ATP to form Glu-AMP and then transferred to the acceptor end of tRNA(Glu). The chain is Glutamate--tRNA ligase from Salinispora tropica (strain ATCC BAA-916 / DSM 44818 / JCM 13857 / NBRC 105044 / CNB-440).